The following is a 384-amino-acid chain: Putative glutamate--cysteine ligase 2 (384 aa).

Belongs to the glutamate--cysteine ligase type 2 family. YbdK subfamily.

The enzyme catalyses L-cysteine + L-glutamate + ATP = gamma-L-glutamyl-L-cysteine + ADP + phosphate + H(+). Its function is as follows. ATP-dependent carboxylate-amine ligase which exhibits weak glutamate--cysteine ligase activity. This Ruegeria pomeroyi (strain ATCC 700808 / DSM 15171 / DSS-3) (Silicibacter pomeroyi) protein is Putative glutamate--cysteine ligase 2.